The primary structure comprises 247 residues: Carboxy-S-adenosyl-L-methionine synthase (247 aa).

S-adenosyl-L-methionine-binding positions include tyrosine 39, 64 to 66 (GCS), 117 to 118 (DI), asparagine 132, and arginine 199.

It belongs to the class I-like SAM-binding methyltransferase superfamily. Cx-SAM synthase family. Homodimer.

It carries out the reaction prephenate + S-adenosyl-L-methionine = carboxy-S-adenosyl-L-methionine + 3-phenylpyruvate + H2O. Catalyzes the conversion of S-adenosyl-L-methionine (SAM) to carboxy-S-adenosyl-L-methionine (Cx-SAM). The polypeptide is Carboxy-S-adenosyl-L-methionine synthase (Aeromonas salmonicida (strain A449)).